The sequence spans 148 residues: Thioredoxin H8 (148 aa).

Residues 1–145 form the Thioredoxin domain; it reads MGANVSTPDQ…LERKLNKYTQ (145 aa). Residues Cys-71 and Cys-74 each act as nucleophile in the active site. Cys-71 and Cys-74 are disulfide-bonded.

This sequence belongs to the thioredoxin family. Plant H-type subfamily.

It localises to the cytoplasm. Probable thiol-disulfide oxidoreductase that may be involved in the redox regulation of a number of cytosolic enzymes. This is Thioredoxin H8 (TRX8) from Arabidopsis thaliana (Mouse-ear cress).